Consider the following 133-residue polypeptide: Urease subunit beta (133 aa).

The segment at 106-133 (VFRPNDSNQNAAVKNDAGEDNANKKGGK) is disordered.

It belongs to the urease beta subunit family. As to quaternary structure, heterotrimer of UreA (gamma), UreB (beta) and UreC (alpha) subunits. Three heterotrimers associate to form the active enzyme.

The protein resides in the cytoplasm. The enzyme catalyses urea + 2 H2O + H(+) = hydrogencarbonate + 2 NH4(+). Its pathway is nitrogen metabolism; urea degradation; CO(2) and NH(3) from urea (urease route): step 1/1. In Staphylococcus epidermidis (strain ATCC 12228 / FDA PCI 1200), this protein is Urease subunit beta.